A 281-amino-acid polypeptide reads, in one-letter code: Pantothenate synthetase (281 aa).

30–37 (MGNLHQGH) is a binding site for ATP. Catalysis depends on His-37, which acts as the Proton donor. Gln-61 is a binding site for (R)-pantoate. Gln-61 contacts beta-alanine. 149 to 152 (GNKD) is an ATP binding site. Gln-155 is a binding site for (R)-pantoate. ATP contacts are provided by residues Ile-178 and 186-189 (MSSR).

The protein belongs to the pantothenate synthetase family. As to quaternary structure, homodimer.

It is found in the cytoplasm. The catalysed reaction is (R)-pantoate + beta-alanine + ATP = (R)-pantothenate + AMP + diphosphate + H(+). The protein operates within cofactor biosynthesis; (R)-pantothenate biosynthesis; (R)-pantothenate from (R)-pantoate and beta-alanine: step 1/1. Catalyzes the condensation of pantoate with beta-alanine in an ATP-dependent reaction via a pantoyl-adenylate intermediate. In Shewanella oneidensis (strain ATCC 700550 / JCM 31522 / CIP 106686 / LMG 19005 / NCIMB 14063 / MR-1), this protein is Pantothenate synthetase.